Reading from the N-terminus, the 196-residue chain is Probable malonic semialdehyde reductase RutE (196 aa).

This sequence belongs to the nitroreductase family. HadB/RutE subfamily. The cofactor is FMN.

It catalyses the reaction 3-hydroxypropanoate + NADP(+) = 3-oxopropanoate + NADPH + H(+). Functionally, may reduce toxic product malonic semialdehyde to 3-hydroxypropionic acid, which is excreted. The sequence is that of Probable malonic semialdehyde reductase RutE from Klebsiella pneumoniae (strain 342).